The primary structure comprises 112 residues: Small ribosomal subunit protein uS17 (112 aa).

Belongs to the universal ribosomal protein uS17 family. In terms of assembly, part of the 30S ribosomal subunit.

Functionally, one of the primary rRNA binding proteins, it binds specifically to the 5'-end of 16S ribosomal RNA. The sequence is that of Small ribosomal subunit protein uS17 from Haloarcula marismortui (strain ATCC 43049 / DSM 3752 / JCM 8966 / VKM B-1809) (Halobacterium marismortui).